The primary structure comprises 262 residues: MKKIEYKHTEIAVKKKLGQNFLTDQNICRKIVESAQLQENDHVLEIGPGFGALTTAILEVVPRFTAVEKDRILAEFIRNEYPSVRVIEMDFLKIDLEELASEGRLRIMGNIPYSITTPILFKLLDNRRNIFSETLMMQHEVARRLVASPGSKEYGILAVQLQTFCDVTYLFKVNRTVFKPRPEVDSAVVSIIPKTAIFDADETGFRNFVRTSFGQRRKTLHNNLKKYYDLSMVTSIDLKLRAESLSVEQFLTLFKELRPLPD.

S-adenosyl-L-methionine contacts are provided by Asn20, Leu22, Gly47, Glu68, Asp90, and Asn110.

It belongs to the class I-like SAM-binding methyltransferase superfamily. rRNA adenine N(6)-methyltransferase family. RsmA subfamily.

Its subcellular location is the cytoplasm. The enzyme catalyses adenosine(1518)/adenosine(1519) in 16S rRNA + 4 S-adenosyl-L-methionine = N(6)-dimethyladenosine(1518)/N(6)-dimethyladenosine(1519) in 16S rRNA + 4 S-adenosyl-L-homocysteine + 4 H(+). Its function is as follows. Specifically dimethylates two adjacent adenosines (A1518 and A1519) in the loop of a conserved hairpin near the 3'-end of 16S rRNA in the 30S particle. May play a critical role in biogenesis of 30S subunits. The protein is Ribosomal RNA small subunit methyltransferase A of Chlorobium phaeobacteroides (strain BS1).